The following is a 141-amino-acid chain: Vesicle-associated membrane protein 4 (141 aa).

The segment at 1–51 (MPPKFKRHLNDDDVTGSVKSERRNLLEDDSDEEEDFFLRGPSGPRFGPRND) is disordered. Residues 1–118 (MPPKFKRHLN…MWWRGCKIKA (118 aa)) are Cytoplasmic-facing. 2 positions are modified to phosphoserine: serine 17 and serine 30. Residues 52 to 112 (KIKHVQNQVD…KQLRRQMWWR (61 aa)) enclose the v-SNARE coiled-coil homology domain. Residues 119 to 139 (IMALAAAILLLMIIILIVVKF) traverse the membrane as a helical; Anchor for type IV membrane protein segment. Residues 140 to 141 (RT) lie on the Vesicular side of the membrane.

It belongs to the synaptobrevin family. As to quaternary structure, identified in a complex containing STX6, STX12, VAMP4 and VTI1A. Interacts with BAIAP3; this interaction is increased in the presence of calcium. In terms of processing, (Microbial infection) Targeted and hydrolyzed by C.botulinum neurotoxin type X (BoNT/X) which hydrolyzes the 87-Arg-|-Ser-88 bond and probably inhibits neurotransmitter release. It remains unknown whether BoNT/X is ever produced, or what organisms it targets.

The protein resides in the golgi apparatus. The protein localises to the trans-Golgi network membrane. Its function is as follows. Involved in the pathway that functions to remove an inhibitor (probably synaptotagmin-4) of calcium-triggered exocytosis during the maturation of secretory granules. May be a marker for this sorting pathway that is critical for remodeling the secretory response of granule. This is Vesicle-associated membrane protein 4 (Vamp4) from Mus musculus (Mouse).